Reading from the N-terminus, the 346-residue chain is tRNA N6-adenosine threonylcarbamoyltransferase (346 aa).

Fe cation is bound by residues histidine 110 and histidine 114. Substrate contacts are provided by residues 132 to 136, aspartate 165, glycine 178, and asparagine 274; that span reads LLSGG. Aspartate 298 contributes to the Fe cation binding site.

This sequence belongs to the KAE1 / TsaD family. The cofactor is Fe(2+).

It localises to the cytoplasm. It catalyses the reaction L-threonylcarbamoyladenylate + adenosine(37) in tRNA = N(6)-L-threonylcarbamoyladenosine(37) in tRNA + AMP + H(+). Functionally, required for the formation of a threonylcarbamoyl group on adenosine at position 37 (t(6)A37) in tRNAs that read codons beginning with adenine. Is involved in the transfer of the threonylcarbamoyl moiety of threonylcarbamoyl-AMP (TC-AMP) to the N6 group of A37, together with TsaE and TsaB. TsaD likely plays a direct catalytic role in this reaction. The sequence is that of tRNA N6-adenosine threonylcarbamoyltransferase from Borreliella burgdorferi (strain ATCC 35210 / DSM 4680 / CIP 102532 / B31) (Borrelia burgdorferi).